Consider the following 280-residue polypeptide: Phosphatidylglycerol--prolipoprotein diacylglyceryl transferase (280 aa).

4 helical membrane passes run 30-50, 71-91, 106-126, and 132-152; these read WYGLAYVAGILLGWLYARRII, FLLWAAGGIVLGGRIGYILFY, IWNGGMSFHGGLLGTTLAIII, and AIPLWSLFDVVAAVVPIGLFF. Position 154 (Arg-154) interacts with a 1,2-diacyl-sn-glycero-3-phospho-(1'-sn-glycerol). Helical transmembrane passes span 188–208, 217–237, and 251–271; these read QLYEAALEGIVLLVVLAWFVY, GLVTGIFVCGYAASRIFVEFF, and WLTMGMVLSLPMALVGIWAIA.

Belongs to the Lgt family.

The protein resides in the cell inner membrane. The catalysed reaction is L-cysteinyl-[prolipoprotein] + a 1,2-diacyl-sn-glycero-3-phospho-(1'-sn-glycerol) = an S-1,2-diacyl-sn-glyceryl-L-cysteinyl-[prolipoprotein] + sn-glycerol 1-phosphate + H(+). It functions in the pathway protein modification; lipoprotein biosynthesis (diacylglyceryl transfer). In terms of biological role, catalyzes the transfer of the diacylglyceryl group from phosphatidylglycerol to the sulfhydryl group of the N-terminal cysteine of a prolipoprotein, the first step in the formation of mature lipoproteins. This is Phosphatidylglycerol--prolipoprotein diacylglyceryl transferase from Rhizobium meliloti (strain 1021) (Ensifer meliloti).